The sequence spans 1017 residues: MDQNGASTEARSKRKQPPTSPSTDRPLKQIKPEVDAHTRNGVPKSPELEVVDDAHSVYSLEEPIAPVAGAVHDTAEWQKTIEGVVKSVVSIHFCQTCSFDTDPAISSEATGFVVDAEKGYILTNRHVVGAGPFIGYCIFDNHEECDVYPVYRDPVHDFGILRFDPKAIKYMSVSALQLRPDFAKVGVEIRVVGNDAGEKLSILSGVISRLDRNAPEYGEGYSDFNTNYIQAAAAASGGSSGSPVVNRDGFAVALQAGGRADGAATDYFLPLDRPLRALELVRRGEAVTRGTVQTQWILKPFDECRRLGLSTDLEKAVRTQFPKETGMLVAEVVLPQGPASTKVEEGDILIKVNGEFITQFVRLDSILDDNVGKTISVTIQRAGENLEVELDVGNLHDITPDRFVSVSGASFHDLSYQQARLYAISLKNAGVFVCEAAGSFRFADGYASGWLIQEVDNQPTPNLDTFIEVMKKIPDRKRIVIQYKHLRDLHTANTSITAVDRHWHAKIRIATRNDKTGLWDFKPIADPVPAVPQVSRRANFVKMSSNYPNAVDIVRSFVRVHVSMPIKLDGFPKMNKQGYGLVVDAEQGLVLVSRAILPYDLCDISLIIADSIFIDAKVVFMHPLQNYVIVKYDPALVNAPVKTPKFATEFIRKGDETIFFGLNQNFRPVVAKTVVTDITTVAIPASAITPRYRATNFDAITVDTNQASHSGSGVLIAEDGTVQALWLSYLGERTSHSGKDVEYHLGLATPNLLPILNEIKSGKTPKLRILNVEFQTVQMSQARVMGVSEDWIEKTEQADPERHQLFMVRKVDSGHGGDGMLEGDILLTLNGKLVTRSPDLDVMYNNEFLEAVIVRKREEKTIKVTTVATEEIETDRMVSFCGATLHRPHQAVRQQISKIHSDVYISSRARGSPAYMYGLAPTNFLTHVNNIPTPDLSTFLREVKKIGDNEYFRLKVMTFDNVPWVATMKKNEHYFPTIEYVKDDTEALGWKRIIHECEDGGAREEMAIDNEAGGDEE.

The interval 1–46 (MDQNGASTEARSKRKQPPTSPSTDRPLKQIKPEVDAHTRNGVPKSP) is disordered. The span at 25–38 (RPLKQIKPEVDAHT) shows a compositional bias: basic and acidic residues. The tract at residues 88–278 (VVSIHFCQTC…LPLDRPLRAL (191 aa)) is serine protease. Active-site charge relay system residues include histidine 126, aspartate 157, and serine 239. PDZ domains lie at 305–383 (RRLG…QRAG) and 879–960 (SFCG…MTFD).

This sequence belongs to the peptidase S1C family.

Its subcellular location is the nucleus. In terms of biological role, nuclear serine protease which mediates apoptosis. The sequence is that of Pro-apoptotic serine protease NMA111 (NMA111) from Phaeosphaeria nodorum (strain SN15 / ATCC MYA-4574 / FGSC 10173) (Glume blotch fungus).